The following is a 234-amino-acid chain: MNDGVSTPVWLHIGPLEIHETVVTTWLIMLVLVVASILLTRRLSLQPGRLQAMLEGVVLTLESAIANADSRNARRLLPLIGTFWIFLPVANLLGVIPGMHSPTRDLSVTAALALVVFFAVHAYGVRQSGLGYFKHYLSPSPILLPFHIISEFTRTVALAIRLFGNIMSLEMAALLILLVAGFLAPVPILMLHIIEALVQAYIFGMLALIYVAGAMQQTTESPITSSSRSTSGAP.

A run of 5 helical transmembrane segments spans residues 20–40 (ETVVTTWLIMLVLVVASILLT), 76–96 (LLPLIGTFWIFLPVANLLGVI), 105–125 (DLSVTAALALVVFFAVHAYGV), 162–184 (LFGNIMSLEMAALLILLVAGFLA), and 195–215 (EALVQAYIFGMLALIYVAGAM).

This sequence belongs to the ATPase A chain family. F-type ATPases have 2 components, CF(1) - the catalytic core - and CF(0) - the membrane proton channel. CF(1) has five subunits: alpha(3), beta(3), gamma(1), delta(1), epsilon(1). CF(0) has three main subunits: a(1), b(2) and c(9-12). The alpha and beta chains form an alternating ring which encloses part of the gamma chain. CF(1) is attached to CF(0) by a central stalk formed by the gamma and epsilon chains, while a peripheral stalk is formed by the delta and b chains.

The protein localises to the cell inner membrane. In terms of biological role, key component of the proton channel; it plays a direct role in the translocation of protons across the membrane. The sequence is that of ATP synthase subunit a 1 from Hahella chejuensis (strain KCTC 2396).